A 391-amino-acid polypeptide reads, in one-letter code: ATP-sensitive inward rectifier potassium channel 1 (391 aa).

Over 1–77 (MGASERSVFR…IWTTVLDLKW (77 aa)) the chain is Cytoplasmic. At serine 44 the chain carries Phosphoserine; by SGK1. The helical transmembrane segment at 78–102 (RYKMTVFITAFLGSWFLFGLLWYVV) threads the bilayer. The Extracellular segment spans residues 103-127 (AYVHKDLPEFYPPDNRTPCVENING). Residue asparagine 117 is glycosylated (N-linked (GlcNAc...) asparagine). The segment at residues 128-139 (MTSAFLFSLETQ) is an intramembrane region (helical; Pore-forming). The segment at residues 140-146 (VTIGYGF) is an intramembrane region (pore-forming). The Selectivity filter motif lies at 141–146 (TIGYGF). The Extracellular portion of the chain corresponds to 147-155 (RFVTEQCAT). A helical transmembrane segment spans residues 156–177 (AIFLLIFQSILGVIINSFMCGA). At 178 to 391 (ILAKISRPKK…EVDETDDTQM (214 aa)) the chain is on the cytoplasmic side. The interval 180-207 (AKISRPKKRAKTITFSKNAVISKRGGKL) is polyphosphoinositide (PIP2)-binding. 223 to 230 (GSHIYGKL) lines the ATP pocket.

This sequence belongs to the inward rectifier-type potassium channel (TC 1.A.2.1) family. KCNJ1 subfamily. Interacts with SGK1 and SLC9A3R2/NHERF2. Phosphorylation at Ser-44 by SGK1 is necessary for its expression at the cell membrane. Mainly in kidney (renal cortex, medulla and papilla). As to expression, kidney.

It is found in the cell membrane. It catalyses the reaction K(+)(in) = K(+)(out). With respect to regulation, inhibited by WNK3. Activated by phosphatidylinositol 4,5 biphosphate (PtdIns(4,5)P2). Its function is as follows. Inward rectifier potassium channels are characterized by a greater tendency to allow potassium to flow into the cell rather than out of it. Their voltage dependence is regulated by the concentration of extracellular potassium; as external potassium is raised, the voltage range of the channel opening shifts to more positive voltages. The inward rectification is mainly due to the blockage of outward current by internal magnesium. This channel is activated by internal ATP and can be blocked by external barium. In the kidney, probably plays a major role in potassium homeostasis. Functionally, inward rectifier potassium channels are characterized by a greater tendency to allow potassium to flow into the cell rather than out of it. Their voltage dependence is regulated by the concentration of extracellular potassium; as external potassium is raised, the voltage range of the channel opening shifts to more positive voltages. This Rattus norvegicus (Rat) protein is ATP-sensitive inward rectifier potassium channel 1 (Kcnj1).